The chain runs to 75 residues: Translational regulator CsrA (75 aa).

The protein belongs to the CsrA/RsmA family. As to quaternary structure, homodimer; the beta-strands of each monomer intercalate to form a hydrophobic core, while the alpha-helices form wings that extend away from the core.

The protein localises to the cytoplasm. Its function is as follows. A translational regulator that binds mRNA to regulate translation initiation and/or mRNA stability. Usually binds in the 5'-UTR at or near the Shine-Dalgarno sequence preventing ribosome-binding, thus repressing translation. Its main target seems to be the major flagellin gene, while its function is anatagonized by FliW. The polypeptide is Translational regulator CsrA (Exiguobacterium sp. (strain ATCC BAA-1283 / AT1b)).